The primary structure comprises 430 residues: tRNA-2-methylthio-N(6)-dimethylallyladenosine synthase (430 aa).

An MTTase N-terminal domain is found at 1-110 (MKVHIFTYGC…VPDAVLNAKN (110 aa)). The [4Fe-4S] cluster site is built by C10, C46, C75, C146, C150, and C153. One can recognise a Radical SAM core domain in the interval 132 to 363 (RSSNHHAWVT…LNLQKTINKE (232 aa)). Residues 366-427 (KSYLGKEVEV…AGPLYGEIKK (62 aa)) enclose the TRAM domain.

The protein belongs to the methylthiotransferase family. MiaB subfamily. As to quaternary structure, monomer. It depends on [4Fe-4S] cluster as a cofactor.

It localises to the cytoplasm. It catalyses the reaction N(6)-dimethylallyladenosine(37) in tRNA + (sulfur carrier)-SH + AH2 + 2 S-adenosyl-L-methionine = 2-methylsulfanyl-N(6)-dimethylallyladenosine(37) in tRNA + (sulfur carrier)-H + 5'-deoxyadenosine + L-methionine + A + S-adenosyl-L-homocysteine + 2 H(+). In terms of biological role, catalyzes the methylthiolation of N6-(dimethylallyl)adenosine (i(6)A), leading to the formation of 2-methylthio-N6-(dimethylallyl)adenosine (ms(2)i(6)A) at position 37 in tRNAs that read codons beginning with uridine. The protein is tRNA-2-methylthio-N(6)-dimethylallyladenosine synthase of Fervidobacterium nodosum (strain ATCC 35602 / DSM 5306 / Rt17-B1).